Reading from the N-terminus, the 256-residue chain is Acetyl-coenzyme A carboxylase carboxyl transferase subunit alpha (256 aa).

The CoA carboxyltransferase C-terminal domain occupies 1-236 (MSDVARILKE…KTAIVDELAE (236 aa)).

This sequence belongs to the AccA family. Acetyl-CoA carboxylase is a heterohexamer composed of biotin carboxyl carrier protein (AccB), biotin carboxylase (AccC) and two subunits each of ACCase subunit alpha (AccA) and ACCase subunit beta (AccD).

The protein resides in the cytoplasm. It catalyses the reaction N(6)-carboxybiotinyl-L-lysyl-[protein] + acetyl-CoA = N(6)-biotinyl-L-lysyl-[protein] + malonyl-CoA. The protein operates within lipid metabolism; malonyl-CoA biosynthesis; malonyl-CoA from acetyl-CoA: step 1/1. In terms of biological role, component of the acetyl coenzyme A carboxylase (ACC) complex. First, biotin carboxylase catalyzes the carboxylation of biotin on its carrier protein (BCCP) and then the CO(2) group is transferred by the carboxyltransferase to acetyl-CoA to form malonyl-CoA. This is Acetyl-coenzyme A carboxylase carboxyl transferase subunit alpha from Streptococcus thermophilus (strain CNRZ 1066).